The following is a 368-amino-acid chain: Aspartate-semialdehyde dehydrogenase (368 aa).

Residues 10 to 13 (RGMV), 37 to 38 (TS), and Gln72 contribute to the NADP(+) site. Residue Arg101 coordinates phosphate. Catalysis depends on Cys134, which acts as the Acyl-thioester intermediate. NADP(+)-binding positions include 160–161 (SG) and Pro191. A substrate-binding site is contributed by Glu239. Lys242 serves as a coordination point for phosphate. Arg266 contributes to the substrate binding site. His273 acts as the Proton acceptor in catalysis. Gln349 lines the NADP(+) pocket.

It belongs to the aspartate-semialdehyde dehydrogenase family. Homodimer.

It catalyses the reaction L-aspartate 4-semialdehyde + phosphate + NADP(+) = 4-phospho-L-aspartate + NADPH + H(+). It participates in amino-acid biosynthesis; L-lysine biosynthesis via DAP pathway; (S)-tetrahydrodipicolinate from L-aspartate: step 2/4. Its pathway is amino-acid biosynthesis; L-methionine biosynthesis via de novo pathway; L-homoserine from L-aspartate: step 2/3. It functions in the pathway amino-acid biosynthesis; L-threonine biosynthesis; L-threonine from L-aspartate: step 2/5. Its function is as follows. Catalyzes the NADPH-dependent formation of L-aspartate-semialdehyde (L-ASA) by the reductive dephosphorylation of L-aspartyl-4-phosphate. This Azotobacter vinelandii protein is Aspartate-semialdehyde dehydrogenase.